We begin with the raw amino-acid sequence, 417 residues long: Bifunctional thiamine biosynthesis protein ThiDN (417 aa).

Residues 1–235 (MVILAIGGYD…KSKFGYNSNP (235 aa)) are hydroxymethylpyrimidine/phosphomethylpyrimidine kinase. Gln-41 lines the 4-amino-5-hydroxymethyl-2-methylpyrimidine pocket. The segment at 236–417 (TYINKEKVIK…VIQKIYNTLM (182 aa)) is thiamine-phosphate synthase.

The protein in the N-terminal section; belongs to the ThiD family. This sequence in the C-terminal section; belongs to the ThiN family.

It catalyses the reaction 4-amino-5-hydroxymethyl-2-methylpyrimidine + ATP = 4-amino-2-methyl-5-(phosphooxymethyl)pyrimidine + ADP + H(+). The catalysed reaction is 4-amino-2-methyl-5-(phosphooxymethyl)pyrimidine + ATP = 4-amino-2-methyl-5-(diphosphooxymethyl)pyrimidine + ADP. The enzyme catalyses 2-[(2R,5Z)-2-carboxy-4-methylthiazol-5(2H)-ylidene]ethyl phosphate + 4-amino-2-methyl-5-(diphosphooxymethyl)pyrimidine + 2 H(+) = thiamine phosphate + CO2 + diphosphate. It carries out the reaction 2-(2-carboxy-4-methylthiazol-5-yl)ethyl phosphate + 4-amino-2-methyl-5-(diphosphooxymethyl)pyrimidine + 2 H(+) = thiamine phosphate + CO2 + diphosphate. It catalyses the reaction 4-methyl-5-(2-phosphooxyethyl)-thiazole + 4-amino-2-methyl-5-(diphosphooxymethyl)pyrimidine + H(+) = thiamine phosphate + diphosphate. The protein operates within cofactor biosynthesis; thiamine diphosphate biosynthesis; 4-amino-2-methyl-5-diphosphomethylpyrimidine from 5-amino-1-(5-phospho-D-ribosyl)imidazole. It functions in the pathway cofactor biosynthesis; thiamine diphosphate biosynthesis; thiamine phosphate from 4-amino-2-methyl-5-diphosphomethylpyrimidine and 4-methyl-5-(2-phosphoethyl)-thiazole: step 1/1. In terms of biological role, catalyzes the phosphorylation of hydroxymethylpyrimidine phosphate (HMP-P) to HMP-PP, and of HMP to HMP-P. Functionally, condenses 4-methyl-5-(beta-hydroxyethyl)thiazole monophosphate (THZ-P) and 4-amino-5-hydroxymethyl pyrimidine pyrophosphate (HMP-PP) to form thiamine monophosphate (TMP). In Methanocaldococcus jannaschii (strain ATCC 43067 / DSM 2661 / JAL-1 / JCM 10045 / NBRC 100440) (Methanococcus jannaschii), this protein is Bifunctional thiamine biosynthesis protein ThiDN (thiDN).